A 138-amino-acid chain; its full sequence is ATP synthase epsilon chain 2 (138 aa).

Belongs to the ATPase epsilon chain family. As to quaternary structure, F-type ATPases have 2 components, CF(1) - the catalytic core - and CF(0) - the membrane proton channel. CF(1) has five subunits: alpha(3), beta(3), gamma(1), delta(1), epsilon(1). CF(0) has three main subunits: a, b and c.

Its subcellular location is the cell inner membrane. Produces ATP from ADP in the presence of a proton gradient across the membrane. This Syntrophotalea carbinolica (strain DSM 2380 / NBRC 103641 / GraBd1) (Pelobacter carbinolicus) protein is ATP synthase epsilon chain 2.